Reading from the N-terminus, the 632-residue chain is Probable potassium transport system protein Kup (632 aa).

12 helical membrane-spanning segments follow: residues 19-39, 59-79, 110-130, 146-166, 178-198, 221-241, 256-276, 298-318, 346-366, 375-395, 403-423, and 428-448; these read LVVG…LYSL, IISM…VMFV, LIMM…VITP, PGLS…LFFI, FGPI…IHLV, LQAF…EALY, WFVL…AMLL, MVLL…SGAF, IYMP…VLAF, AYGI…ALVM, PALV…FFAA, and IAEG…LLMT.

It belongs to the HAK/KUP transporter (TC 2.A.72) family.

The protein resides in the cell inner membrane. It catalyses the reaction K(+)(in) + H(+)(in) = K(+)(out) + H(+)(out). Transport of potassium into the cell. Likely operates as a K(+):H(+) symporter. The sequence is that of Probable potassium transport system protein Kup from Cupriavidus metallidurans (strain ATCC 43123 / DSM 2839 / NBRC 102507 / CH34) (Ralstonia metallidurans).